A 154-amino-acid chain; its full sequence is Myoglobin (154 aa).

In terms of domain architecture, Globin spans 2 to 148 (GLSDGEWQLV…FRNDIAAKYK (147 aa)). Ser-4 carries the phosphoserine modification. His-65 provides a ligand contact to nitrite. His-65 is an O2 binding site. At Thr-68 the chain carries Phosphothreonine. His-94 contributes to the heme b binding site.

The protein belongs to the globin family. As to quaternary structure, monomeric.

The protein localises to the cytoplasm. The protein resides in the sarcoplasm. It carries out the reaction Fe(III)-heme b-[protein] + nitric oxide + H2O = Fe(II)-heme b-[protein] + nitrite + 2 H(+). The enzyme catalyses H2O2 + AH2 = A + 2 H2O. Monomeric heme protein which primary function is to store oxygen and facilitate its diffusion within muscle tissues. Reversibly binds oxygen through a pentacoordinated heme iron and enables its timely and efficient release as needed during periods of heightened demand. Depending on the oxidative conditions of tissues and cells, and in addition to its ability to bind oxygen, it also has a nitrite reductase activity whereby it regulates the production of bioactive nitric oxide. Under stress conditions, like hypoxia and anoxia, it also protects cells against reactive oxygen species thanks to its pseudoperoxidase activity. The protein is Myoglobin (MB) of Ctenodactylus gundi (Northern gundi).